Here is a 411-residue protein sequence, read N- to C-terminus: tRNA (guanine(37)-N(1))-methyltransferase (411 aa).

S-adenosyl-L-methionine is bound by residues histidine 216, 254 to 255 (DL), 282 to 283 (DG), and asparagine 303. Positions 391 to 411 (ERQASKQDDPKRRKVAAENAA) are disordered.

It belongs to the class I-like SAM-binding methyltransferase superfamily. TRM5/TYW2 family. As to quaternary structure, monomer.

The protein resides in the mitochondrion matrix. The protein localises to the nucleus. Its subcellular location is the cytoplasm. It carries out the reaction guanosine(37) in tRNA + S-adenosyl-L-methionine = N(1)-methylguanosine(37) in tRNA + S-adenosyl-L-homocysteine + H(+). Specifically methylates the N1 position of guanosine-37 in various cytoplasmic and mitochondrial tRNAs. Methylation is not dependent on the nature of the nucleoside 5' of the target nucleoside. This is the first step in the biosynthesis of wybutosine (yW), a modified base adjacent to the anticodon of tRNAs and required for accurate decoding. The polypeptide is tRNA (guanine(37)-N(1))-methyltransferase (Phytophthora infestans (strain T30-4) (Potato late blight agent)).